The sequence spans 503 residues: ATP synthase subunit alpha (503 aa).

Residue 170–177 participates in ATP binding; sequence GDRQTGKT.

This sequence belongs to the ATPase alpha/beta chains family. In terms of assembly, F-type ATPases have 2 components, CF(1) - the catalytic core - and CF(0) - the membrane proton channel. CF(1) has five subunits: alpha(3), beta(3), gamma(1), delta(1), epsilon(1). CF(0) has three main subunits: a(1), b(2) and c(9-12). The alpha and beta chains form an alternating ring which encloses part of the gamma chain. CF(1) is attached to CF(0) by a central stalk formed by the gamma and epsilon chains, while a peripheral stalk is formed by the delta and b chains.

The protein localises to the cell membrane. The catalysed reaction is ATP + H2O + 4 H(+)(in) = ADP + phosphate + 5 H(+)(out). Produces ATP from ADP in the presence of a proton gradient across the membrane. The alpha chain is a regulatory subunit. The sequence is that of ATP synthase subunit alpha from Brevibacillus brevis (strain 47 / JCM 6285 / NBRC 100599).